Here is a 276-residue protein sequence, read N- to C-terminus: Diaminopimelate epimerase (276 aa).

Residues Asn13, Gln46, and Asn66 each contribute to the substrate site. Cys75 functions as the Proton donor in the catalytic mechanism. Substrate-binding positions include 76 to 77 (GN), Asn159, Asn192, and 210 to 211 (ER). Residue Cys219 is the Proton acceptor of the active site. 220–221 (GT) lines the substrate pocket.

Belongs to the diaminopimelate epimerase family. In terms of assembly, homodimer.

It localises to the cytoplasm. It carries out the reaction (2S,6S)-2,6-diaminopimelate = meso-2,6-diaminopimelate. The protein operates within amino-acid biosynthesis; L-lysine biosynthesis via DAP pathway; DL-2,6-diaminopimelate from LL-2,6-diaminopimelate: step 1/1. Functionally, catalyzes the stereoinversion of LL-2,6-diaminopimelate (L,L-DAP) to meso-diaminopimelate (meso-DAP), a precursor of L-lysine and an essential component of the bacterial peptidoglycan. This Azotobacter vinelandii (strain DJ / ATCC BAA-1303) protein is Diaminopimelate epimerase.